Consider the following 429-residue polypeptide: Histidine--tRNA ligase (429 aa).

The protein belongs to the class-II aminoacyl-tRNA synthetase family. In terms of assembly, homodimer.

It is found in the cytoplasm. It catalyses the reaction tRNA(His) + L-histidine + ATP = L-histidyl-tRNA(His) + AMP + diphosphate + H(+). The sequence is that of Histidine--tRNA ligase from Streptococcus pneumoniae (strain Taiwan19F-14).